Reading from the N-terminus, the 547-residue chain is Chaperonin GroEL (547 aa).

ATP is bound by residues 30–33 (TLGP), Lys-51, 87–91 (DGTTT), Gly-415, 479–481 (NAA), and Asp-495. Residues 526–547 (KEEKSDLSVPPQGGMGGMGGMM) are disordered. A compositionally biased stretch (gly residues) spans 538–547 (GGMGGMGGMM).

The protein belongs to the chaperonin (HSP60) family. In terms of assembly, forms a cylinder of 14 subunits composed of two heptameric rings stacked back-to-back. Interacts with the co-chaperonin GroES.

The protein localises to the cytoplasm. The catalysed reaction is ATP + H2O + a folded polypeptide = ADP + phosphate + an unfolded polypeptide.. Its function is as follows. Together with its co-chaperonin GroES, plays an essential role in assisting protein folding. The GroEL-GroES system forms a nano-cage that allows encapsulation of the non-native substrate proteins and provides a physical environment optimized to promote and accelerate protein folding. This Buchnera aphidicola subsp. Tetraneura caerulescens protein is Chaperonin GroEL.